The primary structure comprises 295 residues: Hepatic leukemia factor (295 aa).

Residues 37 to 52 show a composition bias toward basic and acidic residues; the sequence is EDAFSKDKDKEKKLDD. 2 disordered regions span residues 37–70 and 93–167; these read EDAF…PTLW and SENG…IDPD. A bZIP domain is found at 225–288; sequence DDKYWARRRK…GKCKNILAKY (64 aa). Residues 227-247 are basic motif; sequence KYWARRRKNNMAAKRSRDARR. The segment at 248-255 is leucine-zipper; the sequence is LKENQIAI.

This sequence belongs to the bZIP family. PAR subfamily. As to quaternary structure, binds DNA specifically as homodimer or heterodimer with other PAR factors. Highly expressed in liver; lower levels in lung and kidney.

Its subcellular location is the nucleus. The sequence is that of Hepatic leukemia factor (HLF) from Homo sapiens (Human).